Here is a 148-residue protein sequence, read N- to C-terminus: 3-dehydroquinate dehydratase (148 aa).

Catalysis depends on Tyr-23, which acts as the Proton acceptor. 3 residues coordinate substrate: Asn-75, His-81, and Asp-88. Residue His-101 is the Proton donor of the active site. Substrate is bound by residues 102-103 (LS) and Arg-112.

The protein belongs to the type-II 3-dehydroquinase family. Homododecamer.

The enzyme catalyses 3-dehydroquinate = 3-dehydroshikimate + H2O. Its pathway is metabolic intermediate biosynthesis; chorismate biosynthesis; chorismate from D-erythrose 4-phosphate and phosphoenolpyruvate: step 3/7. Functionally, catalyzes a trans-dehydration via an enolate intermediate. The protein is 3-dehydroquinate dehydratase of Halorhodospira halophila (strain DSM 244 / SL1) (Ectothiorhodospira halophila (strain DSM 244 / SL1)).